A 233-amino-acid chain; its full sequence is Cell number regulator 8 (233 aa).

Transmembrane regions (helical) follow at residues 85-101 and 115-138; these read VCLL…GSNV and CLPY…APWF.

This sequence belongs to the cornifelin family. In terms of tissue distribution, expressed in roots, coleoptiles, leaves, stalks, apical meristems, immature ears, embryos, endosperm, pericarp, silks, tassel spikelets and pollen. Highest expression in the pericarp and stalks.

Its subcellular location is the membrane. The chain is Cell number regulator 8 (CNR8) from Zea mays (Maize).